The primary structure comprises 337 residues: MTNNSGSKAELVVGGKYKLVRKIGSGSFGDVYLGITTTNGEDVAVKLESQKVKHPQLLYESKLYTILQGGVGIPHMHWYGQEKDNNVLVMDLLGPSLEDLFNFCSRRFTMKTVLMLADQMISRIEYVHTKNFLHRDIKPDNFLMGTGRHCNKLFLIDFGLAKKYRDNRTRQHIPYREDKHLIGTVRYASINAHLGIEQSRRDDMESLGYVFMYFNRTSLPWQGLRAMTKKQKYEKISEKKMSTPVEVLCKGFPAEFAMYLNYCRGLRFEEVPDYMYLRQLFRILFRTLNHQYDYTFDWTMLKQKAAQQAASSSGQGQQAQTQTGKQTEKNKNNVKDN.

Lysine 8 is subject to N6-acetyllysine. A Protein kinase domain is found at 17–285 (YKLVRKIGSG…YLRQLFRILF (269 aa)). ATP is bound by residues 23 to 31 (IGSGSFGDV) and lysine 46. Aspartate 136 (proton acceptor) is an active-site residue. Residues 309-325 (AASSSGQGQQAQTQTGK) show a composition bias toward low complexity. The segment at 309-337 (AASSSGQGQQAQTQTGKQTEKNKNNVKDN) is disordered. Residues 326–337 (QTEKNKNNVKDN) are compositionally biased toward basic and acidic residues.

It belongs to the protein kinase superfamily. CK1 Ser/Thr protein kinase family. Casein kinase I subfamily. Interacts with FAM83A, FAM83B, FAM83C, FAM83D, FAM83E, FAM83F, FAM83G and FAM83H (via DUF1669).

It localises to the cytoplasm. The enzyme catalyses L-seryl-[protein] + ATP = O-phospho-L-seryl-[protein] + ADP + H(+). The catalysed reaction is L-threonyl-[protein] + ATP = O-phospho-L-threonyl-[protein] + ADP + H(+). Casein kinases are operationally defined by their preferential utilization of acidic proteins such as caseins as substrates. It can phosphorylate a large number of proteins. Participates in Wnt signaling. The chain is Casein kinase I isoform alpha-like (CSNK1A1L) from Homo sapiens (Human).